The sequence spans 185 residues: dCTP deaminase, dUMP-forming (185 aa).

DCTP contacts are provided by residues K99–R104, D117, T125–E127, Q146, Y159, K166, and Q170. E127 functions as the Proton donor/acceptor in the catalytic mechanism.

The protein belongs to the dCTP deaminase family. As to quaternary structure, homotrimer.

The catalysed reaction is dCTP + 2 H2O = dUMP + NH4(+) + diphosphate. It participates in pyrimidine metabolism; dUMP biosynthesis; dUMP from dCTP: step 1/1. In terms of biological role, bifunctional enzyme that catalyzes both the deamination of dCTP to dUTP and the hydrolysis of dUTP to dUMP without releasing the toxic dUTP intermediate. This Methanospirillum hungatei JF-1 (strain ATCC 27890 / DSM 864 / NBRC 100397 / JF-1) protein is dCTP deaminase, dUMP-forming.